Reading from the N-terminus, the 95-residue chain is MSCYTAILKSVGGLALFQDANGAIDLCRHFFMYFCEQKLRPNSFWFVVVRAIASMIMYLVLGIALLYISEQDDKKNTNNASNSNKLNESSINSNS.

A signal peptide spans 1-22 (MSCYTAILKSVGGLALFQDANG). The Intravirion portion of the chain corresponds to 23–45 (AIDLCRHFFMYFCEQKLRPNSFW). A helical membrane pass occupies residues 46 to 66 (FVVVRAIASMIMYLVLGIALL). Residues 67-83 (YISEQDDKKNTNNASNS) are Virion surface-facing. Residues 76–95 (NTNNASNSNKLNESSINSNS) are disordered. Residues 77 to 95 (TNNASNSNKLNESSINSNS) are compositionally biased toward low complexity. Asn79 and Asn87 each carry an N-linked (GlcNAc...) asparagine; by host glycan.

The protein belongs to the oerthopoxvirus OPG135 family.

It is found in the virion membrane. The protein resides in the host cytoplasm. In terms of biological role, envelope protein. Required for an early step in virion morphogenesis. The polypeptide is Virion membrane protein OPG135 (OPG135) (Homo sapiens (Human)).